The following is a 241-amino-acid chain: Transforming protein p29 (241 aa).

The tract at residues 1–41 (MPAARAAPAADEPMRDPVAPVRAPALPRPAPGAVAPASGGA) is disordered. 2 S-palmitoyl cysteine; by host lipidation sites follow: Cys233 and Cys236. At Cys238 the chain carries Cysteine methyl ester; by host. The S-farnesyl cysteine; by host moiety is linked to residue Cys238. The propeptide at 239-241 (VLS) is removed in mature form.

Belongs to the small GTPase superfamily. Ras family.

It localises to the host cell membrane. It catalyses the reaction GTP + H2O = GDP + phosphate + H(+). Alternates between an inactive form bound to GDP and an active form bound to GTP. Activated by a guanine nucleotide-exchange factor (GEF) and inactivated by a GTPase-activating protein (GAP). This is Transforming protein p29 (H-RAS) from Mus musculus (Mouse).